The primary structure comprises 1328 residues: ABC transporter C family member 7 (1328 aa).

One can recognise an ABC transmembrane type-1 1 domain in the interval 104–389 (HKTSIIVQIF…LPQAIQRLLS (286 aa)). 6 consecutive transmembrane segments (helical) span residues 112–132 (IFSAIVSVLSPLCLRAFILYV), 140–160 (SFLVGLFYAVLVLMGALFLSI), 224–244 (LILLVAPIQIIALLALLCWTI), 245–265 (GYSGLVGFLIMILSLPLSTFL), 287–307 (ISEMINGIYLLKLYNWELFFI), and 333–353 (MVVQISSALVLVSSFTVYTLI). An ABC transporter 1 domain is found at 457–678 (IELVNNDSIE…FDFESIMKTK (222 aa)). Residue 490 to 497 (GVVGSGKS) coordinates ATP. Residues 684–695 (LNNSNNNNNNNN) show a composition bias toward low complexity. The tract at residues 684–708 (LNNSNNNNNNNNNKEEEEDVENLEK) is disordered. 5 consecutive transmembrane segments (helical) span residues 762–782 (FIFFFTMIMMYIISQLLFLLF), 802–822 (DSFYILYYLLLVGLFSVFLGI), 894–914 (VLMMIVINPLIVFPFLLLALF), 988–1008 (IGIKIEIISSAAVFLSAFFSL), and 1014–1034 (GLSVLAVTTSLSLTGYLNWCI). The ABC transmembrane type-1 2 domain maps to 765-1046 (FFTMIMMYII…YIEFSMKMSS (282 aa)). The region spanning 1083–1316 (IQFKNVEIKY…INNQNSKFKK (234 aa)) is the ABC transporter 2 domain. Residue 1117-1124 (GKSGSGKS) coordinates ATP.

It belongs to the ABC transporter superfamily. ABCC family. Conjugate transporter (TC 3.A.1.208) subfamily.

Its subcellular location is the membrane. The polypeptide is ABC transporter C family member 7 (abcC7) (Dictyostelium discoideum (Social amoeba)).